The sequence spans 420 residues: Protein BDLF2 (420 aa).

Disordered regions lie at residues 1 to 21 (MVDE…SREE) and 64 to 129 (AAAV…GGQR). Topologically, residues 1 to 184 (MVDEQVAVEH…AETLAEPPRC (184 aa)) are intravirion. The span at 92–108 (TNTQDQNQNQTTRARTN) shows a compositional bias: low complexity. Residues 185–205 (FMLSFVFIYYCCYLAFLALLA) form a helical; Signal-anchor for type II membrane protein membrane-spanning segment. Over 206–420 (FGFNPLFLPS…LEEVMYVMVQ (215 aa)) the chain is Virion surface. N258, N264, N300, N304, N371, and N384 each carry an N-linked (GlcNAc...) asparagine; by host glycan.

This sequence belongs to the herpesviridae BDLF2 family. Interacts with BMRF2.

It localises to the virion membrane. Functionally, rearranges cellular actin to increase intercellular contacts and thereby promote virus cell-to-cell spreading. Induce the outgrowth of long, branched plasma membrane fronds to create intercellular network for virion traffic. The fronds are actin based and RhoA-dependent. This Epstein-Barr virus (strain GD1) (HHV-4) protein is Protein BDLF2.